A 197-amino-acid chain; its full sequence is Recombination protein RecR (197 aa).

The C4-type zinc finger occupies 56–71 (CQRCHSFSDEAVCPLC). One can recognise a Toprim domain in the interval 79–174 (TLLCVVETAA…KVTRLAQGVP (96 aa)).

This sequence belongs to the RecR family.

May play a role in DNA repair. It seems to be involved in an RecBC-independent recombinational process of DNA repair. It may act with RecF and RecO. This Psychrobacter cryohalolentis (strain ATCC BAA-1226 / DSM 17306 / VKM B-2378 / K5) protein is Recombination protein RecR.